Here is a 354-residue protein sequence, read N- to C-terminus: Neutral protease 2 homolog BCIN_12g06300 (354 aa).

The signal sequence occupies residues 1-19; the sequence is MRSFSKILAVASLAAIANS. A propeptide spanning residues 20–179 is cleaved from the precursor; it reads AVLKRDNNVL…PSSIDRRTVL (160 aa). Disulfide bonds link Cys183–Cys255 and Cys262–Cys280. His305 is a binding site for Zn(2+). Glu306 is a catalytic residue. His309 and Asp320 together coordinate Zn(2+).

It belongs to the peptidase M35 family. Zn(2+) serves as cofactor.

It localises to the secreted. It carries out the reaction Preferential cleavage of bonds with hydrophobic residues in P1'. Also 3-Asn-|-Gln-4 and 8-Gly-|-Ser-9 bonds in insulin B chain.. In terms of biological role, secreted metalloproteinase that allows assimilation of proteinaceous substrates. Shows high activities on basic nuclear substrates such as histone and protamine. The protein is Neutral protease 2 homolog BCIN_12g06300 of Botryotinia fuckeliana (strain B05.10) (Noble rot fungus).